The primary structure comprises 725 residues: Eukaryotic translation initiation factor 3 subunit B (725 aa).

The residue at position 23 (Ser-23) is a Phosphoserine. In terms of domain architecture, RRM spans 39–129 (TVVVIEGAPV…HTFVVRKLNQ (91 aa)). Ser-135 is subject to Phosphoserine. Thr-136 is modified (phosphothreonine). WD repeat units lie at residues 190 to 229 (DREN…MCAR), 304 to 344 (DGKK…LVDK), and 347 to 386 (IKID…QPAR). Positions 630–671 (LTKEDMKKIRKKLKDYNRLFDEEDIAEQSSANRELAARRRQL) form a coiled coil.

This sequence belongs to the eIF-3 subunit B family. Component of the eukaryotic translation initiation factor 3 (eIF-3) complex. The eIF-3 complex appears to include tif32/eif3a, SPAC25G10.08/eif3b, tif33/eif3c, SPBC4C3.07/eif3f, tif35/eif3g and sum1/eif3i. This set of common subunits may also associate exclusively with either moe1/eif3d and int6/eif3e, or with SPAC821.05/eif3h and SPAC1751.03/eif3m. The eIF-3 complex may also include SPAC3A12.13c/eif3j.

The protein localises to the cytoplasm. Functionally, RNA-binding component of the eukaryotic translation initiation factor 3 (eIF-3) complex, which is involved in protein synthesis of a specialized repertoire of mRNAs and, together with other initiation factors, stimulates binding of mRNA and methionyl-tRNAi to the 40S ribosome. The eIF-3 complex specifically targets and initiates translation of a subset of mRNAs involved in cell proliferation. The sequence is that of Eukaryotic translation initiation factor 3 subunit B from Schizosaccharomyces pombe (strain 972 / ATCC 24843) (Fission yeast).